Consider the following 91-residue polypeptide: Small ribosomal subunit protein uS19 (91 aa).

The protein belongs to the universal ribosomal protein uS19 family.

Functionally, protein S19 forms a complex with S13 that binds strongly to the 16S ribosomal RNA. The polypeptide is Small ribosomal subunit protein uS19 (Aliarcobacter butzleri (strain RM4018) (Arcobacter butzleri)).